A 114-amino-acid chain; its full sequence is Ribonuclease P protein component (114 aa).

The protein belongs to the RnpA family. As to quaternary structure, consists of a catalytic RNA component (M1 or rnpB) and a protein subunit.

It carries out the reaction Endonucleolytic cleavage of RNA, removing 5'-extranucleotides from tRNA precursor.. Functionally, RNaseP catalyzes the removal of the 5'-leader sequence from pre-tRNA to produce the mature 5'-terminus. It can also cleave other RNA substrates such as 4.5S RNA. The protein component plays an auxiliary but essential role in vivo by binding to the 5'-leader sequence and broadening the substrate specificity of the ribozyme. The sequence is that of Ribonuclease P protein component from Alkaliphilus oremlandii (strain OhILAs) (Clostridium oremlandii (strain OhILAs)).